The chain runs to 422 residues: MSEFNFISRLHNRGLISHITNEDNLSKLIENKSISLYCGFDPTEESLHIGHLLPLIMLKRFQIAGHRPIILIGGATSLIGDPSFKEKERVFNSNYNVNIWTEKITKQISCFLDFNCGKNSAVLLNNNTWFKQINILSFLRDVGKYFSVNTMINRAAVKQRITRPDQGISFTEFSYNLLQAYDFFILNQQYQADLQIGGADQWGNISSGMHLIHRKTKRVVYGLTVPLLIQSNGIKFGKTESGTIWLDSNKTSPYKFYQFWMNIEDANVYYFLKLFTFIKVSEINKLEKNKNIKNQIINDKSLLAKHITQLVHGKEKLLAAERITKFLFLKNTTHIEESDLQQLKQDGIPFIEVSNVKDLQEALVLTSLAQSRTQAKNMIISNSISINTEKIRKNHIFHEKDKLFGKFTLLSRGKKQHSLLCW.

An L-tyrosine-binding site is contributed by Tyr37. The 'HIGH' region signature appears at 42–51 (PTEESLHIGH). Residues Tyr175 and Gln179 each contribute to the L-tyrosine site. The short motif at 235–239 (KFGKT) is the 'KMSKS' region element. Lys238 provides a ligand contact to ATP. The region spanning 357 to 414 (KDLQEALVLTSLAQSRTQAKNMIISNSISINTEKIRKNHIFHEKDKLFGKFTLLSRGK) is the S4 RNA-binding domain.

It belongs to the class-I aminoacyl-tRNA synthetase family. TyrS type 1 subfamily. Homodimer.

The protein localises to the cytoplasm. The catalysed reaction is tRNA(Tyr) + L-tyrosine + ATP = L-tyrosyl-tRNA(Tyr) + AMP + diphosphate + H(+). In terms of biological role, catalyzes the attachment of tyrosine to tRNA(Tyr) in a two-step reaction: tyrosine is first activated by ATP to form Tyr-AMP and then transferred to the acceptor end of tRNA(Tyr). In Buchnera aphidicola subsp. Acyrthosiphon pisum (strain APS) (Acyrthosiphon pisum symbiotic bacterium), this protein is Tyrosine--tRNA ligase.